The following is a 357-amino-acid chain: tRNA N6-adenosine threonylcarbamoyltransferase (357 aa).

Fe cation-binding residues include histidine 116 and histidine 120. Residues 139–143 (LVSGG), aspartate 172, glycine 185, and asparagine 284 contribute to the substrate site. Aspartate 312 provides a ligand contact to Fe cation.

It belongs to the KAE1 / TsaD family. The cofactor is Fe(2+).

The protein resides in the cytoplasm. The enzyme catalyses L-threonylcarbamoyladenylate + adenosine(37) in tRNA = N(6)-L-threonylcarbamoyladenosine(37) in tRNA + AMP + H(+). In terms of biological role, required for the formation of a threonylcarbamoyl group on adenosine at position 37 (t(6)A37) in tRNAs that read codons beginning with adenine. Is involved in the transfer of the threonylcarbamoyl moiety of threonylcarbamoyl-AMP (TC-AMP) to the N6 group of A37, together with TsaE and TsaB. TsaD likely plays a direct catalytic role in this reaction. This chain is tRNA N6-adenosine threonylcarbamoyltransferase, found in Synechococcus sp. (strain CC9605).